The chain runs to 462 residues: Chromosomal replication initiator protein DnaA (462 aa).

The domain I, interacts with DnaA modulators stretch occupies residues 1–84 (MAVSLWQQCI…RFDIGSRPSA (84 aa)). Positions 84-125 (ARTVQPAPAAPRPTTGHTQTKARVGTAFNIQAEPMANANHRS) are domain II. Residues 126–342 (NINPTYQFDN…GALNRVIANA (217 aa)) are domain III, AAA+ region. ATP-binding residues include G170, G172, K173, and T174. The segment at 343–462 (NFTGRPITID…YANLIRTLSS (120 aa)) is domain IV, binds dsDNA.

It belongs to the DnaA family. In terms of assembly, oligomerizes as a right-handed, spiral filament on DNA at oriC.

The protein localises to the cytoplasm. In terms of biological role, plays an essential role in the initiation and regulation of chromosomal replication. ATP-DnaA binds to the origin of replication (oriC) to initiate formation of the DNA replication initiation complex once per cell cycle. Binds the DnaA box (a 9 base pair repeat at the origin) and separates the double-stranded (ds)DNA. Forms a right-handed helical filament on oriC DNA; dsDNA binds to the exterior of the filament while single-stranded (ss)DNA is stabiized in the filament's interior. The ATP-DnaA-oriC complex binds and stabilizes one strand of the AT-rich DNA unwinding element (DUE), permitting loading of DNA polymerase. After initiation quickly degrades to an ADP-DnaA complex that is not apt for DNA replication. Binds acidic phospholipids. This chain is Chromosomal replication initiator protein DnaA, found in Shewanella denitrificans (strain OS217 / ATCC BAA-1090 / DSM 15013).